Consider the following 613-residue polypeptide: Cleavage and polyadenylation specificity factor subunit 3-II (613 aa).

Residues 67-72 (HFHMDH) carry the HXHXDH motif motif.

Belongs to the metallo-beta-lactamase superfamily. RNA-metabolizing metallo-beta-lactamase-like family. INTS11 subfamily. Component of the CPSF complex, at least composed of CPSF160, CPSF100, CPSF73-I, CPSF73-II, CPSF30, FY and FIPS5. Interacts with CPSF30, CPSF100, CPSF160 and FY. Highly expressed in senescence leaves, petals, stamens, pollen and late stages of siliques with seeds. Also detected in roots, stems, leaves and seedlings.

It localises to the nucleus. Component of the cleavage and polyadenylation specificity factor (CPSF) complex that play a key role in pre-mRNA 3'-end formation, recognizing the AAUAAA signal sequence and interacting with poly(A) polymerase and other factors to bring about cleavage and poly(A) addition. May function as mRNA 3'-end-processing endonuclease and also be involved in the histone 3'-end pre-mRNA processing. The polypeptide is Cleavage and polyadenylation specificity factor subunit 3-II (CPSF73-II) (Arabidopsis thaliana (Mouse-ear cress)).